A 336-amino-acid chain; its full sequence is Methionine synthase (336 aa).

Residues H210, C212, E234, and C294 each contribute to the Zn(2+) site.

It belongs to the archaeal MetE family. Zn(2+) serves as cofactor.

It participates in amino-acid biosynthesis; L-methionine biosynthesis via de novo pathway. Its function is as follows. Catalyzes the transfer of a methyl group to L-homocysteine resulting in methionine formation. The physiological methyl donor is unknown. The polypeptide is Methionine synthase (Thermococcus kodakarensis (strain ATCC BAA-918 / JCM 12380 / KOD1) (Pyrococcus kodakaraensis (strain KOD1))).